Reading from the N-terminus, the 224-residue chain is LOB domain-containing protein 15 (224 aa).

The region spanning threonine 44 to isoleucine 145 is the LOB domain. The segment at serine 171–glycine 224 is disordered. Residues alanine 178 to proline 198 are compositionally biased toward pro residues.

The protein belongs to the LOB domain-containing protein family. As to expression, expressed in young shoots, roots, stems, leaves and flowers.

The protein is LOB domain-containing protein 15 (LBD15) of Arabidopsis thaliana (Mouse-ear cress).